The sequence spans 266 residues: Probable dihydroorotate dehydrogenase B (NAD(+)), electron transfer subunit (266 aa).

An FAD-binding FR-type domain is found at 5–99 (NVPEVLEIKR…RGPYGRGFEL (95 aa)). [2Fe-2S] cluster contacts are provided by cysteine 217, cysteine 222, cysteine 225, and cysteine 235.

Belongs to the PyrK family. Heterotetramer of 2 PyrK and 2 PyrD type B subunits. [2Fe-2S] cluster is required as a cofactor. It depends on FAD as a cofactor.

It participates in pyrimidine metabolism; UMP biosynthesis via de novo pathway; orotate from (S)-dihydroorotate (NAD(+) route): step 1/1. Its function is as follows. Responsible for channeling the electrons from the oxidation of dihydroorotate from the FMN redox center in the PyrD type B subunit to the ultimate electron acceptor NAD(+). The protein is Probable dihydroorotate dehydrogenase B (NAD(+)), electron transfer subunit of Methanothermobacter thermautotrophicus (strain ATCC 29096 / DSM 1053 / JCM 10044 / NBRC 100330 / Delta H) (Methanobacterium thermoautotrophicum).